The primary structure comprises 39 residues: APRLPQCQGDDQEKCLCNKDECPPGQCRFPRGDADPYCE.

A high affinity binding domain region spans residues 27 to 38; that stretch reads CRFPRGDADPYC. Positions 31-33 match the Cell attachment site motif; sequence RGD.

This sequence belongs to the ornatin family.

It localises to the secreted. In terms of biological role, inhibits fibrinogen interaction with platelet receptors expressed on glycoprotein IIb-IIIa complex. May prevent blood from clotting during either feeding and/or storage of ingested blood. The protein is Decorsin of Macrobdella decora (North American leech).